Consider the following 963-residue polypeptide: Protein translocase subunit SecA (963 aa).

ATP is bound by residues Gln87, 105-109 (GEGKT), and Asp512. Disordered regions lie at residues 868 to 909 (GPVM…EDFT) and 924 to 963 (QFVG…CHGS). Over residues 874 to 886 (PDEEEDGDEDSVE) the composition is skewed to acidic residues. 4 residues coordinate Zn(2+): Cys949, Cys951, Cys960, and His961.

It belongs to the SecA family. As to quaternary structure, monomer and homodimer. Part of the essential Sec protein translocation apparatus which comprises SecA, SecYEG and auxiliary proteins SecDF. Other proteins may also be involved. Zn(2+) serves as cofactor.

It localises to the cell inner membrane. The protein resides in the cytoplasm. The enzyme catalyses ATP + H2O + cellular proteinSide 1 = ADP + phosphate + cellular proteinSide 2.. In terms of biological role, part of the Sec protein translocase complex. Interacts with the SecYEG preprotein conducting channel. Has a central role in coupling the hydrolysis of ATP to the transfer of proteins into and across the cell membrane, serving as an ATP-driven molecular motor driving the stepwise translocation of polypeptide chains across the membrane. The protein is Protein translocase subunit SecA of Solibacter usitatus (strain Ellin6076).